The sequence spans 155 residues: D-aminoacyl-tRNA deacylase (155 aa).

Residues Gly-137–Pro-138 carry the Gly-cisPro motif, important for rejection of L-amino acids motif.

This sequence belongs to the DTD family. As to quaternary structure, homodimer.

It is found in the cytoplasm. The catalysed reaction is glycyl-tRNA(Ala) + H2O = tRNA(Ala) + glycine + H(+). It catalyses the reaction a D-aminoacyl-tRNA + H2O = a tRNA + a D-alpha-amino acid + H(+). Its function is as follows. An aminoacyl-tRNA editing enzyme that deacylates mischarged D-aminoacyl-tRNAs. Also deacylates mischarged glycyl-tRNA(Ala), protecting cells against glycine mischarging by AlaRS. Acts via tRNA-based rather than protein-based catalysis; rejects L-amino acids rather than detecting D-amino acids in the active site. By recycling D-aminoacyl-tRNA to D-amino acids and free tRNA molecules, this enzyme counteracts the toxicity associated with the formation of D-aminoacyl-tRNA entities in vivo and helps enforce protein L-homochirality. In Paracidovorax citrulli (strain AAC00-1) (Acidovorax citrulli), this protein is D-aminoacyl-tRNA deacylase.